Here is a 240-residue protein sequence, read N- to C-terminus: LexA repressor (240 aa).

Residues 26 to 46 constitute a DNA-binding region (H-T-H motif); that stretch reads FDEMKDALDLASKSGIHRLIT. Active-site for autocatalytic cleavage activity residues include S160 and K198.

It belongs to the peptidase S24 family. In terms of assembly, homodimer.

The catalysed reaction is Hydrolysis of Ala-|-Gly bond in repressor LexA.. Functionally, represses a number of genes involved in the response to DNA damage (SOS response), including recA and lexA. In the presence of single-stranded DNA, RecA interacts with LexA causing an autocatalytic cleavage which disrupts the DNA-binding part of LexA, leading to derepression of the SOS regulon and eventually DNA repair. This is LexA repressor from Agrobacterium fabrum (strain C58 / ATCC 33970) (Agrobacterium tumefaciens (strain C58)).